Here is a 151-residue protein sequence, read N- to C-terminus: Cytochrome c-type biogenesis protein CcmE (151 aa).

Residues 1–8 lie on the Cytoplasmic side of the membrane; sequence MNPQRKKR. Residues 9–29 form a helical; Signal-anchor for type II membrane protein membrane-spanning segment; the sequence is LFLILGLLAGVAVAVGFALSA. Topologically, residues 30-151 are periplasmic; sequence LQQNINLFYT…QAASGAEAKP (122 aa). 2 residues coordinate heme: His124 and Tyr128.

It belongs to the CcmE/CycJ family.

Its subcellular location is the cell inner membrane. Functionally, heme chaperone required for the biogenesis of c-type cytochromes. Transiently binds heme delivered by CcmC and transfers the heme to apo-cytochromes in a process facilitated by CcmF and CcmH. This is Cytochrome c-type biogenesis protein CcmE from Pseudomonas putida (strain W619).